The primary structure comprises 115 residues: MSNIIKQLEQEQMKQDVPSFRPGDTVEVKVWVVEGSKKRLQAFEGVVIAIRNRGLHSAFTVRKISNGEGVERVFQTHSPVVDSISVKRRGAVRKAKLYYLRERTGKAARIKERLN.

This sequence belongs to the bacterial ribosomal protein bL19 family.

Its function is as follows. This protein is located at the 30S-50S ribosomal subunit interface and may play a role in the structure and function of the aminoacyl-tRNA binding site. In Escherichia coli O139:H28 (strain E24377A / ETEC), this protein is Large ribosomal subunit protein bL19.